We begin with the raw amino-acid sequence, 388 residues long: Pepsin F (388 aa).

An N-terminal signal peptide occupies residues 1 to 15; sequence MKWLGLLGLVALSEC. A propeptide spans 16–58 (activation peptide); it reads LVTIPLMKVKSMRENLRENDILLDYLEKHPYRPTYKLLSGQQD. A Peptidase A1 domain is found at 74–385; the sequence is YIGIISIGTP…DRANNRIGLA (312 aa). Aspartate 92 is an active-site residue. 2 disulfides stabilise this stretch: cysteine 105–cysteine 110 and cysteine 266–cysteine 270. Residue aspartate 275 is part of the active site. Cysteine 309 and cysteine 343 are oxidised to a cystine.

The protein belongs to the peptidase A1 family.

Its subcellular location is the secreted. It catalyses the reaction Preferential cleavage: hydrophobic, preferably aromatic, residues in P1 and P1' positions. Cleaves 1-Phe-|-Val-2, 4-Gln-|-His-5, 13-Glu-|-Ala-14, 14-Ala-|-Leu-15, 15-Leu-|-Tyr-16, 16-Tyr-|-Leu-17, 23-Gly-|-Phe-24, 24-Phe-|-Phe-25 and 25-Phe-|-Tyr-26 bonds in the B chain of insulin.. Its function is as follows. Shows particularly broad specificity; although bonds involving phenylalanine and leucine are preferred, many others are also cleaved to some extent. The protein is Pepsin F of Oryctolagus cuniculus (Rabbit).